The chain runs to 433 residues: MTDLTPREIVSELDRFIIGQKDAKRAVAVALRNRWRRKQLSDDIRDEVYPKNILMIGPTGVGKTEISRRLARLAKAPFLKVEATKFTEVGYVGRDVDSIIRDLVDAAIVETRARMREDVKSRAVKAAEDRVIEAIAGRDAREQTREMFRGKLKRGELDATVIEVEVADTSNPMQMLDPTGQGQMGMMNLGEIFGKAFGGRTTRRKMTVAESHDILMNEEADKLLDDEVVKATALEAVQENGIVFIDEIDKVCARSDMRGADVSREGVQRDLLPLIEGTTVSTKYGPVKTDHILFIASGAFHIAKPSDLLPELQGRLPIRVELRALTEEDFVRILSETDNALTRQYKALMKTEKVGITFTEEGIKALASIAAEVNRSVENIGARRLYTVMERVFEELSFHAPDRSGEEVTVDAAYVEKNLGELARSTDLSRYVL.

Residues I18, 60-65, D246, E311, and R383 each bind ATP; that span reads GVGKTE.

This sequence belongs to the ClpX chaperone family. HslU subfamily. As to quaternary structure, a double ring-shaped homohexamer of HslV is capped on each side by a ring-shaped HslU homohexamer. The assembly of the HslU/HslV complex is dependent on binding of ATP.

The protein resides in the cytoplasm. Functionally, ATPase subunit of a proteasome-like degradation complex; this subunit has chaperone activity. The binding of ATP and its subsequent hydrolysis by HslU are essential for unfolding of protein substrates subsequently hydrolyzed by HslV. HslU recognizes the N-terminal part of its protein substrates and unfolds these before they are guided to HslV for hydrolysis. This is ATP-dependent protease ATPase subunit HslU from Cereibacter sphaeroides (strain ATCC 17025 / ATH 2.4.3) (Rhodobacter sphaeroides).